The sequence spans 249 residues: Triosephosphate isomerase (249 aa).

Substrate contacts are provided by Asn12 and Lys14. At Lys14 the chain carries N6-acetyllysine. A Deamidated asparagine modification is found at Asn16. The residue at position 68 (Tyr68) is a 3'-nitrotyrosine. Asn72 carries the deamidated asparagine modification. Ser80 carries the post-translational modification Phosphoserine. Residue His96 is the Electrophile of the active site. Ser106 bears the Phosphoserine mark. Lys142 is covalently cross-linked (Glycyl lysine isopeptide (Lys-Gly) (interchain with G-Cter in SUMO1)). The residue at position 149 (Lys149) is an N6-succinyllysine. At Lys156 the chain carries N6-acetyllysine; alternate. The residue at position 156 (Lys156) is an N6-succinyllysine; alternate. At Ser159 the chain carries Phosphoserine. Glu166 acts as the Proton acceptor in catalysis. At Thr173 the chain carries Phosphothreonine. Lys194 is modified (N6-acetyllysine; alternate). N6-succinyllysine; alternate is present on Lys194. N6-methyllysine; alternate is present on Lys194. Ser198 carries the phosphoserine modification. The residue at position 209 (Tyr209) is a 3'-nitrotyrosine. At Ser212 the chain carries Phosphoserine. Residue Thr214 is modified to Phosphothreonine. Ser223 bears the Phosphoserine mark. Lys238 is subject to N6-acetyllysine.

The protein belongs to the triosephosphate isomerase family. Homodimer. Asn-16 and Asn-72 undergo deamidation which gives rise to four extra negative charges. These are expected to decrease subunit-subunit interactions and so expose the hydrophobic interface to the aqueous environment.

The protein resides in the cytoplasm. It carries out the reaction D-glyceraldehyde 3-phosphate = dihydroxyacetone phosphate. The catalysed reaction is dihydroxyacetone phosphate = methylglyoxal + phosphate. It participates in carbohydrate degradation; glycolysis; D-glyceraldehyde 3-phosphate from glycerone phosphate: step 1/1. It functions in the pathway carbohydrate biosynthesis; gluconeogenesis. Its function is as follows. Triosephosphate isomerase is an extremely efficient metabolic enzyme that catalyzes the interconversion between dihydroxyacetone phosphate (DHAP) and D-glyceraldehyde-3-phosphate (G3P) in glycolysis and gluconeogenesis. Functionally, it is also responsible for the non-negligible production of methylglyoxal a reactive cytotoxic side-product that modifies and can alter proteins, DNA and lipids. This Oryctolagus cuniculus (Rabbit) protein is Triosephosphate isomerase (TPI1).